Consider the following 92-residue polypeptide: Small ribosomal subunit protein uS19c (92 aa).

This sequence belongs to the universal ribosomal protein uS19 family.

Its subcellular location is the plastid. The protein resides in the chloroplast. In terms of biological role, protein S19 forms a complex with S13 that binds strongly to the 16S ribosomal RNA. This is Small ribosomal subunit protein uS19c from Angiopteris evecta (Mule's foot fern).